The sequence spans 337 residues: Ketol-acid reductoisomerase (NADP(+)) (337 aa).

The 181-residue stretch at 3–183 folds into the KARI N-terminal Rossmann domain; it reads VEVFYDDDAD…GGTRAGAIRT (181 aa). NADP(+) is bound by residues 26–29, S52, S54, and 84–87; these read YGSQ and DTAQ. The active site involves H109. Residue G135 coordinates NADP(+). The KARI C-terminal knotted domain maps to 184–329; the sequence is TFTEETETDL…SKLRGMMSWV (146 aa). Residues D192, E196, E228, and E232 each coordinate Mg(2+). S253 contacts substrate.

Belongs to the ketol-acid reductoisomerase family. The cofactor is Mg(2+).

It catalyses the reaction (2R)-2,3-dihydroxy-3-methylbutanoate + NADP(+) = (2S)-2-acetolactate + NADPH + H(+). It carries out the reaction (2R,3R)-2,3-dihydroxy-3-methylpentanoate + NADP(+) = (S)-2-ethyl-2-hydroxy-3-oxobutanoate + NADPH + H(+). Its pathway is amino-acid biosynthesis; L-isoleucine biosynthesis; L-isoleucine from 2-oxobutanoate: step 2/4. It participates in amino-acid biosynthesis; L-valine biosynthesis; L-valine from pyruvate: step 2/4. Functionally, involved in the biosynthesis of branched-chain amino acids (BCAA). Catalyzes an alkyl-migration followed by a ketol-acid reduction of (S)-2-acetolactate (S2AL) to yield (R)-2,3-dihydroxy-isovalerate. In the isomerase reaction, S2AL is rearranged via a Mg-dependent methyl migration to produce 3-hydroxy-3-methyl-2-ketobutyrate (HMKB). In the reductase reaction, this 2-ketoacid undergoes a metal-dependent reduction by NADPH to yield (R)-2,3-dihydroxy-isovalerate. This is Ketol-acid reductoisomerase (NADP(+)) from Salinispora arenicola (strain CNS-205).